The chain runs to 31 residues: Photosystem II reaction center protein T (31 aa).

The helical transmembrane segment at 3-23 threads the bilayer; sequence SFAYILILAFSIGTLFFAIAL.

The protein belongs to the PsbT family. PSII is composed of 1 copy each of membrane proteins PsbA, PsbB, PsbC, PsbD, PsbE, PsbF, PsbH, PsbI, PsbJ, PsbK, PsbL, PsbM, PsbT, PsbX, PsbY, PsbZ, Psb30/Ycf12, peripheral proteins PsbO, CyanoQ (PsbQ), PsbU, PsbV and a large number of cofactors. It forms dimeric complexes.

It is found in the cellular thylakoid membrane. In terms of biological role, found at the monomer-monomer interface of the photosystem II (PS II) dimer, plays a role in assembly and dimerization of PSII. PSII is a light-driven water plastoquinone oxidoreductase, using light energy to abstract electrons from H(2)O, generating a proton gradient subsequently used for ATP formation. This Synechococcus sp. (strain RCC307) protein is Photosystem II reaction center protein T.